The chain runs to 173 residues: MYSFMGGGLFCAWVGTILLVVATATDHWMQYRLSGAFAHQGLWRYCLGTKCYLQTESIAYWNATRAFMILSSLCATSGIIMGIVAFAQQPTFTRLSRPFSAGIMFFASTFFVLLALAIYTGVTVSFLGRRFGDWRFSWSYILGWVALLMTFFAGIFYMCAYRMHECRRLSTPR.

Topologically, residues 1-3 (MYS) are cytoplasmic. The helical transmembrane segment at 4–24 (FMGGGLFCAWVGTILLVVATA) threads the bilayer. The Extracellular segment spans residues 25–66 (TDHWMQYRLSGAFAHQGLWRYCLGTKCYLQTESIAYWNATRA). Residues Trp-43 and Trp-61 are each glycosylated (C-linked (Man) tryptophan; partial). A helical transmembrane segment spans residues 67-87 (FMILSSLCATSGIIMGIVAFA). The Cytoplasmic segment spans residues 88–98 (QQPTFTRLSRP). Residues 99–119 (FSAGIMFFASTFFVLLALAIY) traverse the membrane as a helical segment. Topologically, residues 120-140 (TGVTVSFLGRRFGDWRFSWSY) are extracellular. The chain crosses the membrane as a helical span at residues 141–161 (ILGWVALLMTFFAGIFYMCAY). Over 162–173 (RMHECRRLSTPR) the chain is Cytoplasmic. Residue Ser-170 is modified to Phosphoserine. The residue at position 171 (Thr-171) is a Phosphothreonine.

Belongs to the PMP-22/EMP/MP20 family. In terms of assembly, seems to be associated with itself or another lens membrane component via disulfide bonds. Post-translationally, predominantly monophosphorylated on Ser-170. Only about 15% diphosphorylated on both Ser-170 and Thr-171. C-glycosylated. Trp-43 is more extensively C-glycosylated than Trp-61. C-glycosylation may be involved in membrane trafficking. Eye lens specific.

Its subcellular location is the membrane. Present in the thicker 16-17 nm junctions of mammalian lens fiber cells, where it may contribute to cell junctional organization. Acts as a receptor for calmodulin. May play an important role in both lens development and cataractogenesis. This Bos taurus (Bovine) protein is Lens fiber membrane intrinsic protein (LIM2).